The primary structure comprises 142 residues: Lysosomal enzyme trafficking factor (142 aa).

2 helical membrane-spanning segments follow: residues 8 to 28 (MGWI…YYIF) and 76 to 96 (LLPF…VFLF).

It belongs to the LYSET family.

Its subcellular location is the golgi apparatus membrane. Required for mannose-6-phosphate-dependent trafficking of lysosomal enzymes. LYSET bridges GlcNAc-1-phosphate transferase (GNPTAB), to the membrane-bound transcription factor site-1 protease (MBTPS1), thus allowing proteolytic activation of the GNPTAB. GNPTAB is involved in the regulation of M6P-dependent Golgi-to-lysosome trafficking of lysosomal enzymes. LYSET is thus an essential factor for maturation and delivery of lysosomal hydrolases. This chain is Lysosomal enzyme trafficking factor (tmem251), found in Danio rerio (Zebrafish).